The chain runs to 333 residues: Electron transfer flavoprotein subunit alpha, mitochondrial (333 aa).

A mitochondrion-targeting transit peptide spans 1–19 (MFRAAAPGQLRRAASLLRF). A domain I region spans residues 20–204 (QSTLVIAEHA…EISEWLDQKL (185 aa)). Position 59 is an N6-acetyllysine; alternate (lysine 59). Lysine 59 carries the N6-succinyllysine; alternate modification. Lysine 62 carries the post-translational modification N6-acetyllysine. Lysine 69 carries the post-translational modification N6-acetyllysine; alternate. Lysine 69 bears the N6-succinyllysine; alternate mark. At lysine 75 the chain carries N6-acetyllysine. Threonine 93 is subject to Phosphothreonine. N6-acetyllysine occurs at positions 101 and 139. Serine 140 is modified (phosphoserine). The residue at position 158 (lysine 158) is an N6-acetyllysine; alternate. Lysine 158 carries the post-translational modification N6-succinyllysine; alternate. Lysine 164 is subject to N6-acetyllysine. Residue lysine 187 is modified to N6-succinyllysine. Lysine 203 is modified (N6-acetyllysine; alternate). An N6-succinyllysine; alternate modification is found at lysine 203. The interval 205–333 (TKSDRPELTG…PEMTEILKKK (129 aa)) is domain II. At lysine 216 the chain carries N6-succinyllysine. Arginine 223 is an FAD binding site. Lysine 226 and lysine 232 each carry N6-acetyllysine; alternate. Lysine 226 and lysine 232 each carry N6-succinyllysine; alternate. FAD contacts are provided by residues serine 248, 263 to 266 (VGQT), 281 to 286 (SGAIQH), and asparagine 300. N6-succinyllysine is present on lysine 301. 318 to 319 (DL) is a binding site for FAD.

The protein belongs to the ETF alpha-subunit/FixB family. Heterodimer composed of ETFA and ETFB. Identified in a complex that contains ETFA, ETFB and ETFRF1. Interaction with ETFRF1 promotes dissociation of the bound FAD and loss of electron transfer activity. Interacts with TASOR. FAD serves as cofactor.

Its subcellular location is the mitochondrion matrix. Functionally, heterodimeric electron transfer flavoprotein that accepts electrons from several mitochondrial dehydrogenases, including acyl-CoA dehydrogenases, glutaryl-CoA and sarcosine dehydrogenase. It transfers the electrons to the main mitochondrial respiratory chain via ETF-ubiquinone oxidoreductase (ETF dehydrogenase). Required for normal mitochondrial fatty acid oxidation and normal amino acid metabolism. The chain is Electron transfer flavoprotein subunit alpha, mitochondrial (ETFA) from Pongo abelii (Sumatran orangutan).